The primary structure comprises 445 residues: UPF0210 protein Ccon26_06850 (445 aa).

Belongs to the UPF0210 family. Homodimer.

The sequence is that of UPF0210 protein Ccon26_06850 from Campylobacter concisus (strain 13826).